Consider the following 718-residue polypeptide: Quinohemoprotein alcohol dehydrogenase ADH-IIG (718 aa).

The N-terminal stretch at 1–29 (MRQTGLASLPLKSLAVAVLLSLAGTPALA) is a signal peptide. E92 is a pyrroloquinoline quinone binding site. A disulfide bridge connects residues C138 and C139. Pyrroloquinoline quinone contacts are provided by residues R144, T189, and 205-206 (GA). E207 contributes to the Ca(2+) binding site. Residue T264 coordinates pyrroloquinoline quinone. Residues N284 and D329 each coordinate Ca(2+). The active-site Proton acceptor is D329. A pyrroloquinoline quinone-binding site is contributed by K356. Position 415 (W415) interacts with substrate. Pyrroloquinoline quinone-binding positions include 419–420 (DW) and A571. Residues 622-699 (ASIEAGAKLY…QIHQYLIKRA (78 aa)) enclose the Cytochrome c domain. Heme c is bound by residues C635, C638, H639, and M676.

Belongs to the bacterial PQQ dehydrogenase family. In terms of assembly, monomer. Requires pyrroloquinoline quinone as cofactor. The cofactor is Ca(2+). Heme c is required as a cofactor.

The protein resides in the periplasm. The enzyme catalyses 2 oxidized [azurin] + a primary alcohol = 2 reduced [azurin] + an aldehyde + 2 H(+). Exhibits higher affinity for 1-butanol compared to 1,2-propanediol but inhibited by 10 mM 1-butanol. In terms of biological role, catalyzes the dye-linked oxidation of primary alcohols to the corresponding aldehydes and the (subsequent) oxidation of the aldehydes to carboxylic acids. Active with primary alcohols, glycerol, 1,2-propanediol, 1,3-propanediol but not with methanol or sugar alcohols such as D-sorbitol. The protein is Quinohemoprotein alcohol dehydrogenase ADH-IIG of Pseudomonas putida (Arthrobacter siderocapsulatus).